A 395-amino-acid polypeptide reads, in one-letter code: Prostaglandin D2 receptor 2 (395 aa).

Over 1–33 (MSANATLKPLCPILEQMSRLQSHSNTSIRYIDH) the chain is Extracellular. 2 N-linked (GlcNAc...) asparagine glycosylation sites follow: Asn4 and Asn25. A helical membrane pass occupies residues 34-56 (AAVLLHGLASLLGLVENGVILFV). The Cytoplasmic portion of the chain corresponds to 57 to 67 (VGCRMRQTVVT). A helical transmembrane segment spans residues 68 to 89 (TWVLHLALSDLLASASLPFFTY). The Extracellular portion of the chain corresponds to 90 to 106 (FLAVGHSWELGTTFCKL). An intrachain disulfide couples Cys104 to Cys182. A helical transmembrane segment spans residues 107–127 (HSSIFFLNMFASGFLLSAISL). The Cytoplasmic portion of the chain corresponds to 128 to 146 (DRCLQVVRPVWAQNHRTVA). A helical membrane pass occupies residues 147–168 (AAHKVCLVLWALAVLNTVPYFV). Topologically, residues 169-210 (FRDTISRLDGRIMCYYNVLLLNPGPDRDATCNSRQVALAVSK) are extracellular. The helical transmembrane segment at 211–231 (FLLAFLVPLAIIASSHAAVSL) threads the bilayer. Residues 232–247 (RLQHRGRRRPGRFVRL) lie on the Cytoplasmic side of the membrane. Residues 248–269 (VAAVVAAFALCWGPYHVFSLLE) traverse the membrane as a helical segment. The Extracellular segment spans residues 270–288 (ARAHANPGLRPLVWRGLPF). The helical transmembrane segment at 289-308 (VTSLAFFNSVANPVLYVLTC) threads the bilayer. Topologically, residues 309–395 (PDMLRKLRRS…LNRALSSTSS (87 aa)) are cytoplasmic. The Involved in the recycling of CRTH2 signature appears at 330–333 (DSEL). Residues Ser331 and Ser345 each carry the phosphoserine modification. A disordered region spans residues 333-363 (LGGAGSSRRRRTSSTARSASPLALCSRPEEP).

Belongs to the G-protein coupled receptor 1 family. Post-translationally, phosphorylated. As to expression, widespread expression. High expression in stomach, small intestine, heart and thymus. Intermediate expression in colon, spinal cord and peripheral blood and low expression in brain, skeletal muscle and spleen. Expressed also on Th2- and Tc2- type cells, eosinophils and basophils.

It is found in the cell membrane. Its function is as follows. Receptor for prostaglandin D2 (PGD2). Coupled to the G(i)-protein. Receptor activation may result in pertussis toxin-sensitive decreases in cAMP levels and Ca(2+) mobilization. PI3K signaling is also implicated in mediating PTGDR2 effects. PGD2 induced receptor internalization. CRTH2 internalization can be regulated by diverse kinases such as, PKC, PKA, GRK2, GPRK5/GRK5 and GRK6. Receptor activation is responsible, at least in part, in immune regulation and allergic/inflammation responses. The chain is Prostaglandin D2 receptor 2 (PTGDR2) from Homo sapiens (Human).